We begin with the raw amino-acid sequence, 263 residues long: TLC domain-containing protein 4 (263 aa).

The next 4 membrane-spanning stretches (helical) occupy residues 7–27 (LLIS…YFVS), 53–73 (VVST…FLFD), 90–110 (VNIA…ILYW), and 124–144 (ASLY…IGNF). The 203-residue stretch at 44-246 (KKKIEWNSRV…ISKGCIKVIS (203 aa)) folds into the TLC domain. Position 165 is an N6-acetyllysine (K165). Helical transmembrane passes span 173 to 193 (IVIN…ASML) and 211 to 231 (LGVL…VMNV).

This sequence belongs to the TLCD4 family.

The protein resides in the membrane. In Homo sapiens (Human), this protein is TLC domain-containing protein 4.